We begin with the raw amino-acid sequence, 49 residues long: Large ribosomal subunit protein bL33B (49 aa).

This sequence belongs to the bacterial ribosomal protein bL33 family.

This Bacillus cereus (strain ATCC 14579 / DSM 31 / CCUG 7414 / JCM 2152 / NBRC 15305 / NCIMB 9373 / NCTC 2599 / NRRL B-3711) protein is Large ribosomal subunit protein bL33B.